The sequence spans 154 residues: Ribonuclease H (154 aa).

The region spanning 5-147 (GKSRVAIYTD…ADMLARGEVE (143 aa)) is the RNase H type-1 domain. Mg(2+)-binding residues include aspartate 14, glutamate 53, aspartate 75, and aspartate 139.

The protein belongs to the RNase H family. Monomer. It depends on Mg(2+) as a cofactor.

Its subcellular location is the cytoplasm. It catalyses the reaction Endonucleolytic cleavage to 5'-phosphomonoester.. Endonuclease that specifically degrades the RNA of RNA-DNA hybrids. The protein is Ribonuclease H of Anaplasma marginale (strain St. Maries).